We begin with the raw amino-acid sequence, 379 residues long: F-box protein At5g18160 (379 aa).

The interval methionine 1–asparagine 26 is disordered. Residues threonine 11–asparagine 26 are compositionally biased toward polar residues. The region spanning isoleucine 28–arginine 74 is the F-box domain.

The chain is F-box protein At5g18160 from Arabidopsis thaliana (Mouse-ear cress).